The primary structure comprises 591 residues: L-gulonolactone oxidase 2 (591 aa).

Positions 1-27 (MAFTFPPSYRTLVGLYYIFTLMHTAVS) are cleaved as a signal peptide. The 183-residue stretch at 56–238 (STCRAANVAY…SQVTFELQPM (183 aa)) folds into the FAD-binding PCMH-type domain.

It belongs to the oxygen-dependent FAD-linked oxidoreductase family. Requires FAD as cofactor.

It catalyses the reaction L-gulono-1,4-lactone + O2 = L-ascorbate + H2O2 + H(+). Its pathway is cofactor biosynthesis; L-ascorbate biosynthesis. Catalyzes the oxidation of L-gulono-1,4-lactone to ascorbic acid. L-gulono-1,4-lactone is oxidized to hydrogen peroxide and L-xylo-hexulonolactone which spontaneously isomerizes to L-ascorbate. The chain is L-gulonolactone oxidase 2 from Arabidopsis thaliana (Mouse-ear cress).